We begin with the raw amino-acid sequence, 529 residues long: VIN3-like protein 3 (529 aa).

The Nuclear localization signal motif lies at 97 to 104 (PKRQKRDL). A PHD-type zinc finger spans residues 137–207 (RCSCCICFKY…CFNCVSCGKT (71 aa)). The Nuclear localization signal signature appears at 214–221 (LKKQLIIA). The Fibronectin type-III domain occupies 312 to 411 (GSMKIRIESV…FIVSTKTLQD (100 aa)). The segment at 421–529 (MSNCNNANKM…AGVSLILLQD (109 aa)) is VIN3-Interacting Domain (VID).

Interacts with VIN3.

Its subcellular location is the nucleus. In terms of biological role, involved in both the vernalization and photoperiod pathways by regulating gene expression. The protein is VIN3-like protein 3 (VIL3) of Arabidopsis thaliana (Mouse-ear cress).